The sequence spans 245 residues: Protein-L-isoaspartate O-methyltransferase 1 (245 aa).

Serine 76 is a catalytic residue.

It belongs to the methyltransferase superfamily. L-isoaspartyl/D-aspartyl protein methyltransferase family.

The protein resides in the cytoplasm. The enzyme catalyses [protein]-L-isoaspartate + S-adenosyl-L-methionine = [protein]-L-isoaspartate alpha-methyl ester + S-adenosyl-L-homocysteine. Catalyzes the methyl esterification of L-isoaspartyl residues in peptides and proteins that result from spontaneous decomposition of normal L-aspartyl and L-asparaginyl residues. It plays a role in the repair and/or degradation of damaged proteins. This is Protein-L-isoaspartate O-methyltransferase 1 from Rhodopseudomonas palustris (strain HaA2).